Consider the following 250-residue polypeptide: Probable transcriptional regulatory protein RC1_1808 (250 aa).

The segment at 1 to 21 (MAGHSQFKNIMHRKGAQDAKR) is disordered.

Belongs to the TACO1 family.

The protein localises to the cytoplasm. The sequence is that of Probable transcriptional regulatory protein RC1_1808 from Rhodospirillum centenum (strain ATCC 51521 / SW).